Consider the following 92-residue polypeptide: Small ribosomal subunit protein uS19c (92 aa).

This sequence belongs to the universal ribosomal protein uS19 family.

Its subcellular location is the plastid. The protein resides in the chloroplast. Functionally, protein S19 forms a complex with S13 that binds strongly to the 16S ribosomal RNA. This is Small ribosomal subunit protein uS19c (rps19) from Anthoceros angustus (Hornwort).